A 369-amino-acid polypeptide reads, in one-letter code: 2-aminoethylphosphonate--pyruvate transaminase (369 aa).

N6-(pyridoxal phosphate)lysine is present on Lys-193.

It belongs to the class-V pyridoxal-phosphate-dependent aminotransferase family. PhnW subfamily. Homodimer. It depends on pyridoxal 5'-phosphate as a cofactor.

It catalyses the reaction (2-aminoethyl)phosphonate + pyruvate = phosphonoacetaldehyde + L-alanine. In terms of biological role, involved in phosphonate degradation. This chain is 2-aminoethylphosphonate--pyruvate transaminase, found in Burkholderia thailandensis (strain ATCC 700388 / DSM 13276 / CCUG 48851 / CIP 106301 / E264).